Here is a 332-residue protein sequence, read N- to C-terminus: L-lactate dehydrogenase A chain (332 aa).

At Ala2 the chain carries N-acetylalanine. Residue Lys5 is modified to N6-acetyllysine; alternate. At Lys5 the chain carries N6-succinyllysine; alternate. Residue Lys14 is modified to N6-acetyllysine. At Thr18 the chain carries Phosphothreonine. 29 to 57 (GAVGMACAISILMKDLADELALVDVIEDK) contacts NAD(+). Position 57 is an N6-acetyllysine; alternate (Lys57). Residue Lys57 forms a Glycyl lysine isopeptide (Lys-Gly) (interchain with G-Cter in SUMO2); alternate linkage. An N6-acetyllysine modification is found at Lys81. Arg99 is a binding site for NAD(+). Arg106 contributes to the substrate binding site. Lys118 carries the post-translational modification N6-acetyllysine; alternate. Lys118 carries the post-translational modification N6-succinyllysine; alternate. An N6-acetyllysine modification is found at Lys126. Asn138 is an NAD(+) binding site. Substrate contacts are provided by Asn138 and Arg169. His193 serves as the catalytic Proton acceptor. 2 positions are modified to N6-acetyllysine: Lys224 and Lys232. A Phosphotyrosine modification is found at Tyr239. Lys243 carries the post-translational modification N6-acetyllysine. Thr248 is a substrate binding site. Phosphothreonine is present on Thr309. An N6-acetyllysine; alternate modification is found at Lys318. An N6-succinyllysine; alternate modification is found at Lys318. Phosphothreonine is present on Thr322.

It belongs to the LDH/MDH superfamily. LDH family. Homotetramer. Interacts with PTEN upstream reading frame protein MP31. ISGylated.

It localises to the cytoplasm. The enzyme catalyses (S)-lactate + NAD(+) = pyruvate + NADH + H(+). The protein operates within fermentation; pyruvate fermentation to lactate; (S)-lactate from pyruvate: step 1/1. Its function is as follows. Interconverts simultaneously and stereospecifically pyruvate and lactate with concomitant interconversion of NADH and NAD(+). The protein is L-lactate dehydrogenase A chain (LDHA) of Macaca fascicularis (Crab-eating macaque).